The chain runs to 821 residues: Leucine--tRNA ligase (821 aa).

The short motif at 44-54 is the 'HIGH' region element; the sequence is PYPSGRIHMGH. The short motif at 589–593 is the 'KMSKS' region element; the sequence is KMSKS. Lys592 is an ATP binding site.

Belongs to the class-I aminoacyl-tRNA synthetase family.

Its subcellular location is the cytoplasm. The enzyme catalyses tRNA(Leu) + L-leucine + ATP = L-leucyl-tRNA(Leu) + AMP + diphosphate. The chain is Leucine--tRNA ligase from Campylobacter concisus (strain 13826).